Consider the following 30-residue polypeptide: AKYGMAIDLHKCAGCGACGLACKTQNNTDD.

Cysteine 12, cysteine 15, cysteine 18, and cysteine 22 together coordinate [4Fe-4S] cluster.

Heterodimer composed of one large subunit (ArrA) and one small subunit (ArrB). [4Fe-4S] cluster serves as cofactor.

The protein resides in the periplasm. Its function is as follows. Component of the arsenate respiratory reductase (Arr) complex, which catalyzes the reduction of arsenate (As(V)) to arsenite (As(III)). ArrB is probably the electron transfer subunit. This chain is Arsenate respiratory reductase iron-sulfur subunit ArrB, found in Chrysiogenes arsenatis.